Consider the following 295-residue polypeptide: Ankyrin repeat and SOCS box protein 17 (295 aa).

The stretch at 146 to 176 is one ANK repeat; sequence SGITPLLYVAQTRQSNILKILLQYGILEREK. The 64-residue stretch at 232-295 folds into the SOCS box domain; it reads LGRRPIISNW…RLQKYLNLES (64 aa).

It belongs to the ankyrin SOCS box (ASB) family.

It functions in the pathway protein modification; protein ubiquitination. May be a substrate-recognition component of a SCF-like ECS (Elongin-Cullin-SOCS-box protein) E3 ubiquitin-protein ligase complex which mediates the ubiquitination and subsequent proteasomal degradation of target proteins. The chain is Ankyrin repeat and SOCS box protein 17 (ASB17) from Canis lupus familiaris (Dog).